Here is a 254-residue protein sequence, read N- to C-terminus: Triosephosphate isomerase (254 aa).

12-14 (NWK) is a substrate binding site. His-99 (electrophile) is an active-site residue. Glu-169 acts as the Proton acceptor in catalysis. Residues Gly-175, Ser-214, and 235–236 (GG) contribute to the substrate site.

Belongs to the triosephosphate isomerase family. As to quaternary structure, homodimer.

It is found in the cytoplasm. It carries out the reaction D-glyceraldehyde 3-phosphate = dihydroxyacetone phosphate. It participates in carbohydrate biosynthesis; gluconeogenesis. The protein operates within carbohydrate degradation; glycolysis; D-glyceraldehyde 3-phosphate from glycerone phosphate: step 1/1. In terms of biological role, involved in the gluconeogenesis. Catalyzes stereospecifically the conversion of dihydroxyacetone phosphate (DHAP) to D-glyceraldehyde-3-phosphate (G3P). The chain is Triosephosphate isomerase from Bartonella quintana (strain Toulouse) (Rochalimaea quintana).